The primary structure comprises 192 residues: 3-hydroxyanthranilate 3,4-dioxygenase 1 (192 aa).

Arginine 50 is an O2 binding site. 3 residues coordinate Fe cation: histidine 54, glutamate 60, and histidine 102. Substrate is bound at residue glutamate 60. Arginine 106 and glutamate 116 together coordinate substrate. Cysteine 131, cysteine 134, cysteine 168, and cysteine 171 together coordinate a divalent metal cation.

This sequence belongs to the 3-HAO family. It depends on Fe(2+) as a cofactor.

Its subcellular location is the cytoplasm. The catalysed reaction is 3-hydroxyanthranilate + O2 = (2Z,4Z)-2-amino-3-carboxymuconate 6-semialdehyde. The protein operates within cofactor biosynthesis; NAD(+) biosynthesis; quinolinate from L-kynurenine: step 3/3. In terms of biological role, catalyzes the oxidative ring opening of 3-hydroxyanthranilate to 2-amino-3-carboxymuconate semialdehyde, which spontaneously cyclizes to quinolinate. The protein is 3-hydroxyanthranilate 3,4-dioxygenase 1 (bna1-1) of Aspergillus clavatus (strain ATCC 1007 / CBS 513.65 / DSM 816 / NCTC 3887 / NRRL 1 / QM 1276 / 107).